We begin with the raw amino-acid sequence, 397 residues long: Riboflavin biosynthesis protein RibBA (397 aa).

Positions 1-199 (MFHRIEEALE…IEDLIAYRRH (199 aa)) are DHBP synthase. Residues 26 to 27 (RE), aspartate 31, 138 to 142 (RAGHT), and glutamate 162 each bind D-ribulose 5-phosphate. Glutamate 27 is a binding site for Mg(2+). Histidine 141 is a binding site for Mg(2+). Positions 200 to 397 (HETLVTREVE…ASKLGHLLNL (198 aa)) are GTP cyclohydrolase II. 250-254 (RVHSE) provides a ligand contact to GTP. Residues cysteine 255, cysteine 266, and cysteine 268 each coordinate Zn(2+). GTP contacts are provided by residues glutamine 271, 293–295 (EGR), and threonine 315. The active-site Proton acceptor; for GTP cyclohydrolase activity is aspartate 327. Catalysis depends on arginine 329, which acts as the Nucleophile; for GTP cyclohydrolase activity. GTP-binding residues include threonine 350 and lysine 355.

The protein in the N-terminal section; belongs to the DHBP synthase family. In the C-terminal section; belongs to the GTP cyclohydrolase II family. Mg(2+) serves as cofactor. The cofactor is Mn(2+). It depends on Zn(2+) as a cofactor.

It carries out the reaction D-ribulose 5-phosphate = (2S)-2-hydroxy-3-oxobutyl phosphate + formate + H(+). The enzyme catalyses GTP + 4 H2O = 2,5-diamino-6-hydroxy-4-(5-phosphoribosylamino)-pyrimidine + formate + 2 phosphate + 3 H(+). The protein operates within cofactor biosynthesis; riboflavin biosynthesis; 2-hydroxy-3-oxobutyl phosphate from D-ribulose 5-phosphate: step 1/1. Its pathway is cofactor biosynthesis; riboflavin biosynthesis; 5-amino-6-(D-ribitylamino)uracil from GTP: step 1/4. Functionally, catalyzes the conversion of D-ribulose 5-phosphate to formate and 3,4-dihydroxy-2-butanone 4-phosphate. In terms of biological role, catalyzes the conversion of GTP to 2,5-diamino-6-ribosylamino-4(3H)-pyrimidinone 5'-phosphate (DARP), formate and pyrophosphate. This Bacillus mycoides (strain KBAB4) (Bacillus weihenstephanensis) protein is Riboflavin biosynthesis protein RibBA.